Here is a 251-residue protein sequence, read N- to C-terminus: Capsid protein (251 aa).

Positions 3–20 match the Bipartite nuclear localization signal motif; sequence KRDLPWRSMAGTSKVSRN. Positions 35–49 match the Nuclear localization signal motif; that stretch reads KAAEWVNRPMYRKPR. A zinc finger lies at 63-80; that stretch reads CEGPCKVQSFEQRHDISH. Residues 96-117 carry the Nuclear export signal motif; it reads ITHRVGKRFCVKSVYILGKIWM. Residues 195 to 242 carry the Bipartite nuclear localization signal motif; the sequence is KRFWKVNNHVVYNHQEAGKYENHTENALLLYMACTHASNPVYATLKIR.

This sequence belongs to the geminiviridae capsid protein family. In terms of assembly, homomultimer. Binds to single-stranded and double-stranded viral DNA. Interacts (via nuclear localization signals) with host importin alpha-1a.

It is found in the virion. The protein localises to the host nucleus. Its function is as follows. Encapsidates the viral DNA into characteristic twinned ('geminate') particles. Binds the genomic viral ssDNA and shuttles it into and out of the cell nucleus. The CP of bipartite geminiviruses is not required for cell-to-cell or systemic movement. The sequence is that of Capsid protein from Tomato mottle virus (isolate Florida) (ToMoV).